We begin with the raw amino-acid sequence, 657 residues long: MKKLITADDITAIVSVTDPQYAPDGTRAAYVKSQVNQEKDSYTSNIWIYETKTGGSVPWTHGEKRSTDPRWSPDGRTLAFISDREGDAAQLYIMSTEGGEARKLTDIPYGVSKPLWSPDGESILVTVSLGEGESIDDREKTEQDSYEPVEVQGLSYKRDGKGLTRGAYAQLVLVSVKSGEMKELTSHKADHGDPAFSPDGKWLVFSANLTETDDASKPHDVYIMSLESGDLKQVTPHRGSFGSSSFSPDGRYLALLGNEKEYKNATLSKAWLYDIEQGRLTCLTEMLDVHLADALIGDSLIGGAEQRPIWTKDSQGFYVIGTDQGSTGIYYISIEGLVYPIRLEKEYINSFSLSPDEQHFIASVTKPDRPSELYSIPLGQEEKQLTGANDKFVREHTISIPEEIQYATEDGVMVNGWLMRPAQMEGETTYPLILNIHGGPHMMYGHTYFHEFQVLAAKGYAVVYINPRGSHGYGQEFVNAVRGDYGGKDYDDVMQAVDEAIKRDPHIDPKRLGVTGGSYGGFMTNWIVGQTNRFKAAVTQRSISNWISFHGVSDIGYFFTDWQLEHDMFEDTEKLWDRSPLKYAANVETPLLILHGERDDRCPIEQAEQLFIALKKMGKETKLVRFPNASHNLSRTGHPRQRIKRLNYISSWFDQHL.

Residues Ser-518 and His-631 each act as charge relay system in the active site.

Belongs to the peptidase S9C family.

This is an uncharacterized protein from Bacillus subtilis (strain 168).